Here is a 117-residue protein sequence, read N- to C-terminus: Large ribosomal subunit protein bL19 (117 aa).

Belongs to the bacterial ribosomal protein bL19 family.

Its function is as follows. This protein is located at the 30S-50S ribosomal subunit interface and may play a role in the structure and function of the aminoacyl-tRNA binding site. The sequence is that of Large ribosomal subunit protein bL19 from Methylibium petroleiphilum (strain ATCC BAA-1232 / LMG 22953 / PM1).